The sequence spans 198 residues: Pyridoxal 5'-phosphate synthase subunit PdxT (198 aa).

49–51 (GES) lines the L-glutamine pocket. The active-site Nucleophile is Cys81. Residues Arg113 and 141 to 142 (IR) each bind L-glutamine. Active-site charge relay system residues include His177 and Glu179.

Belongs to the glutaminase PdxT/SNO family. As to quaternary structure, in the presence of PdxS, forms a dodecamer of heterodimers. Only shows activity in the heterodimer.

The enzyme catalyses aldehydo-D-ribose 5-phosphate + D-glyceraldehyde 3-phosphate + L-glutamine = pyridoxal 5'-phosphate + L-glutamate + phosphate + 3 H2O + H(+). It carries out the reaction L-glutamine + H2O = L-glutamate + NH4(+). It participates in cofactor biosynthesis; pyridoxal 5'-phosphate biosynthesis. Its function is as follows. Catalyzes the hydrolysis of glutamine to glutamate and ammonia as part of the biosynthesis of pyridoxal 5'-phosphate. The resulting ammonia molecule is channeled to the active site of PdxS. This chain is Pyridoxal 5'-phosphate synthase subunit PdxT, found in Mycobacterium leprae (strain TN).